Here is a 94-residue protein sequence, read N- to C-terminus: MLKPLGDRVVLKVEEKEQTVGGFVLAGSAQEKTKTAQVVATGQGVRTLNGDLVAPSVKAGDRVLVEAHAGLDVKDGDEKYIIVGEANILAIIEK.

This sequence belongs to the GroES chaperonin family. In terms of assembly, heptamer of 7 subunits arranged in a ring. Interacts with the chaperonin GroEL.

Its subcellular location is the cytoplasm. In terms of biological role, together with the chaperonin GroEL, plays an essential role in assisting protein folding. The GroEL-GroES system forms a nano-cage that allows encapsulation of the non-native substrate proteins and provides a physical environment optimized to promote and accelerate protein folding. GroES binds to the apical surface of the GroEL ring, thereby capping the opening of the GroEL channel. The protein is Co-chaperonin GroES of Streptococcus mitis.